A 700-amino-acid chain; its full sequence is Elongation factor G 1 (700 aa).

The tr-type G domain maps to 8–290 (ERYRNIGISA…AVIDYLPSPA (283 aa)). GTP contacts are provided by residues 17 to 24 (AHIDAGKT), 88 to 92 (DTPGH), and 142 to 145 (NKMD).

Belongs to the TRAFAC class translation factor GTPase superfamily. Classic translation factor GTPase family. EF-G/EF-2 subfamily.

Its subcellular location is the cytoplasm. Catalyzes the GTP-dependent ribosomal translocation step during translation elongation. During this step, the ribosome changes from the pre-translocational (PRE) to the post-translocational (POST) state as the newly formed A-site-bound peptidyl-tRNA and P-site-bound deacylated tRNA move to the P and E sites, respectively. Catalyzes the coordinated movement of the two tRNA molecules, the mRNA and conformational changes in the ribosome. This Bordetella parapertussis (strain 12822 / ATCC BAA-587 / NCTC 13253) protein is Elongation factor G 1.